The primary structure comprises 243 residues: Adenylate kinase 4 (243 aa).

40–45 (GSGKGT) contributes to the ATP binding site. Residues 60–89 (ATGDMLRAAVAAKTPLGVKAKEAMDKGELV) form an NMP region. Residues Thr-61, Arg-66, 87–89 (ELV), 115–118 (GFPR), and Gln-122 contribute to the AMP site. The LID stretch occupies residues 156-193 (GRWIHPSSGRSYHTKFAPPKVPGVDDVTGEPLIQRKDD). Arg-157 serves as a coordination point for ATP. 2 residues coordinate AMP: Arg-190 and Arg-201.

The protein belongs to the adenylate kinase family.

It is found in the cytoplasm. The enzyme catalyses AMP + ATP = 2 ADP. Catalyzes the reversible transfer of the terminal phosphate group between ATP and AMP. Plays an important role in cellular energy homeostasis and in adenine nucleotide metabolism. The polypeptide is Adenylate kinase 4 (ADK-B) (Oryza sativa subsp. japonica (Rice)).